Reading from the N-terminus, the 303-residue chain is N-acetyl-D-glucosamine kinase (303 aa).

ATP is bound by residues 4–11 and 133–140; these read GFDIGGTK and GVGGGLVL. Residues His157, Cys177, Cys179, and Cys184 each coordinate Zn(2+).

Belongs to the ROK (NagC/XylR) family. NagK subfamily.

The enzyme catalyses N-acetyl-D-glucosamine + ATP = N-acetyl-D-glucosamine 6-phosphate + ADP + H(+). Its pathway is cell wall biogenesis; peptidoglycan recycling. Functionally, catalyzes the phosphorylation of N-acetyl-D-glucosamine (GlcNAc) derived from cell-wall degradation, yielding GlcNAc-6-P. The protein is N-acetyl-D-glucosamine kinase of Salmonella gallinarum (strain 287/91 / NCTC 13346).